Here is a 232-residue protein sequence, read N- to C-terminus: C4-dicarboxylate TRAP transporter small permease protein DctQ (232 aa).

The next 4 membrane-spanning stretches (helical) occupy residues 30 to 50, 58 to 78, 103 to 123, and 167 to 187; these read EFLI…NVIM, ILWA…VGAS, LYAL…LIGS, and FIPY…FLQI.

Belongs to the TRAP transporter small permease family. The complex comprises the extracytoplasmic solute receptor protein DctP, and the two transmembrane proteins DctQ and DctM.

It localises to the cell inner membrane. Functionally, part of the tripartite ATP-independent periplasmic (TRAP) transport system DctPQM involved in C4-dicarboxylates uptake. This Vibrio cholerae serotype O1 (strain ATCC 39315 / El Tor Inaba N16961) protein is C4-dicarboxylate TRAP transporter small permease protein DctQ.